We begin with the raw amino-acid sequence, 463 residues long: Chromosomal replication initiator protein DnaA (463 aa).

The interval 1–84 (MNTNQIILTN…QLFQHYNNAI (84 aa)) is domain I, interacts with DnaA modulators. The domain II stretch occupies residues 84–124 (IKTVEIITKELPASNQATLELPTKTFADIGSSELNSENIFS). Positions 125-343 (TFDIRFTFDN…GALNKVIAHS (219 aa)) are domain III, AAA+ region. ATP is bound by residues Gly171, Gly173, Lys174, and Thr175. Residues 344 to 463 (NFTAKEITLE…INLMMKILQN (120 aa)) form a domain IV, binds dsDNA region.

Belongs to the DnaA family. As to quaternary structure, oligomerizes as a right-handed, spiral filament on DNA at oriC.

The protein localises to the cytoplasm. Functionally, plays an essential role in the initiation and regulation of chromosomal replication. ATP-DnaA binds to the origin of replication (oriC) to initiate formation of the DNA replication initiation complex once per cell cycle. Binds the DnaA box (a 9 base pair repeat at the origin) and separates the double-stranded (ds)DNA. Forms a right-handed helical filament on oriC DNA; dsDNA binds to the exterior of the filament while single-stranded (ss)DNA is stabiized in the filament's interior. The ATP-DnaA-oriC complex binds and stabilizes one strand of the AT-rich DNA unwinding element (DUE), permitting loading of DNA polymerase. After initiation quickly degrades to an ADP-DnaA complex that is not apt for DNA replication. Binds acidic phospholipids. The sequence is that of Chromosomal replication initiator protein DnaA from Rickettsia bellii (strain OSU 85-389).